The following is a 77-amino-acid chain: Phytosulfokines 5 (77 aa).

The signal sequence occupies residues 1–24 (MVKFTTFLCIIALLLCSTLTHASA). Residues 25–68 (RLNPTSVYPEENSFKKLEQGEVICEGVGEEECFLIRRTLVAHTD) constitute a propeptide that is removed on maturation. Sulfotyrosine is present on residues Tyr69 and Tyr71. The propeptide occupies 74 to 77 (NHNP).

The protein belongs to the phytosulfokine family. Post-translationally, sulfation is important for activity and for the binding to a putative membrane receptor. In terms of processing, PSK-beta is an enzymatic derivative of PSK-alpha. In terms of tissue distribution, expressed in stems, roots, mature leaves and flowers. Most abundant in vascular bundles.

The protein localises to the secreted. Its function is as follows. Promotes plant cell differentiation, organogenesis and somatic embryogenesis as well as cell proliferation. May be involved in the low quiescent center cell proliferation. The polypeptide is Phytosulfokines 5 (PSK5) (Arabidopsis thaliana (Mouse-ear cress)).